The chain runs to 274 residues: UPF0758 protein RHE_CH01848 (274 aa).

The tract at residues 1 to 37 (MAKGPVATSSDDELPFETEEPVADERSFFGGRPQKPA) is disordered. The segment covering 10–22 (SDDELPFETEEPV) has biased composition (acidic residues). The MPN domain maps to 152-274 (VLSSWSSVIQ…HVSLKGLKLI (123 aa)). The Zn(2+) site is built by His-223, His-225, and Asp-236. The JAMM motif motif lies at 223 to 236 (HNHPSGDPTPSRAD).

The protein belongs to the UPF0758 family.

The sequence is that of UPF0758 protein RHE_CH01848 from Rhizobium etli (strain ATCC 51251 / DSM 11541 / JCM 21823 / NBRC 15573 / CFN 42).